The following is a 370-amino-acid chain: Cytochrome b (370 aa).

The next 4 helical transmembrane spans lie at 25–45 (FGSM…FLAV), 69–90 (WMMQ…YIHI), 105–125 (WLSG…GYVL), and 170–190 (FFAL…LHIL). Residues His-75 and His-89 each contribute to the heme b site. His-174 and His-188 together coordinate heme b. A ubiquinone is bound at residue His-193. 4 helical membrane passes run 218–238 (YKDM…VSFF), 280–300 (LGGA…PFTH), 312–332 (LMQL…WTAT), and 339–358 (FTTI…ISNP).

It belongs to the cytochrome b family. In terms of assembly, the cytochrome bc1 complex contains 3 respiratory subunits (MT-CYB, CYC1 and UQCRFS1), 2 core proteins (UQCRC1 and UQCRC2) and probably 6 low-molecular weight proteins. Requires heme b as cofactor.

The protein localises to the mitochondrion inner membrane. Functionally, component of the ubiquinol-cytochrome c reductase complex (complex III or cytochrome b-c1 complex) that is part of the mitochondrial respiratory chain. The b-c1 complex mediates electron transfer from ubiquinol to cytochrome c. Contributes to the generation of a proton gradient across the mitochondrial membrane that is then used for ATP synthesis. This Chilabothrus strigilatus strigilatus (New Providence boa constrictor) protein is Cytochrome b (MT-CYB).